Consider the following 256-residue polypeptide: Thiazole synthase (256 aa).

Residue lysine 102 is the Schiff-base intermediate with DXP of the active site. 1-deoxy-D-xylulose 5-phosphate contacts are provided by residues glycine 163, alanine 189–glycine 190, and alanine 211–threonine 212.

This sequence belongs to the ThiG family. In terms of assembly, homotetramer. Forms heterodimers with either ThiH or ThiS.

The protein resides in the cytoplasm. The catalysed reaction is [ThiS sulfur-carrier protein]-C-terminal-Gly-aminoethanethioate + 2-iminoacetate + 1-deoxy-D-xylulose 5-phosphate = [ThiS sulfur-carrier protein]-C-terminal Gly-Gly + 2-[(2R,5Z)-2-carboxy-4-methylthiazol-5(2H)-ylidene]ethyl phosphate + 2 H2O + H(+). It functions in the pathway cofactor biosynthesis; thiamine diphosphate biosynthesis. Catalyzes the rearrangement of 1-deoxy-D-xylulose 5-phosphate (DXP) to produce the thiazole phosphate moiety of thiamine. Sulfur is provided by the thiocarboxylate moiety of the carrier protein ThiS. In vitro, sulfur can be provided by H(2)S. The sequence is that of Thiazole synthase from Nocardia farcinica (strain IFM 10152).